A 405-amino-acid polypeptide reads, in one-letter code: Na(+)-translocating NADH-quinone reductase subunit F (405 aa).

Residues 3–23 (IILGIVMFTVIVLVLALMILF) form a helical membrane-spanning segment. In terms of domain architecture, 2Fe-2S ferredoxin-type spans 32–124 (GDITIKVNGE…DMDIEVPEEV (93 aa)). [2Fe-2S] cluster contacts are provided by C67, C73, C76, and C108. Residues 127 to 267 (VKKWECTVIS…SGPFGEFFAK (141 aa)) form the FAD-binding FR-type domain. Residues 270 to 387 (DAEMVFIGGG…PIMNQSVIKM (118 aa)) form a catalytic region.

The protein belongs to the NqrF family. In terms of assembly, composed of six subunits; NqrA, NqrB, NqrC, NqrD, NqrE and NqrF. [2Fe-2S] cluster serves as cofactor. It depends on FAD as a cofactor.

It localises to the cell inner membrane. The enzyme catalyses a ubiquinone + n Na(+)(in) + NADH + H(+) = a ubiquinol + n Na(+)(out) + NAD(+). Functionally, NQR complex catalyzes the reduction of ubiquinone-1 to ubiquinol by two successive reactions, coupled with the transport of Na(+) ions from the cytoplasm to the periplasm. The first step is catalyzed by NqrF, which accepts electrons from NADH and reduces ubiquinone-1 to ubisemiquinone by a one-electron transfer pathway. This is Na(+)-translocating NADH-quinone reductase subunit F from Neisseria meningitidis serogroup B (strain ATCC BAA-335 / MC58).